The sequence spans 312 residues: tRNA-dihydrouridine(16) synthase (312 aa).

FMN contacts are provided by residues 7-9 (PME) and glutamine 68. Catalysis depends on cysteine 98, which acts as the Proton donor. Residues lysine 139, 200 to 202 (NGE), and 224 to 225 (GR) each bind FMN.

The protein belongs to the Dus family. DusC subfamily. It depends on FMN as a cofactor.

The catalysed reaction is 5,6-dihydrouridine(16) in tRNA + NADP(+) = uridine(16) in tRNA + NADPH + H(+). It catalyses the reaction 5,6-dihydrouridine(16) in tRNA + NAD(+) = uridine(16) in tRNA + NADH + H(+). Catalyzes the synthesis of 5,6-dihydrouridine (D), a modified base found in the D-loop of most tRNAs, via the reduction of the C5-C6 double bond in target uridines. Specifically modifies U16 in tRNAs. In Salmonella typhimurium (strain LT2 / SGSC1412 / ATCC 700720), this protein is tRNA-dihydrouridine(16) synthase.